The chain runs to 266 residues: GTP cyclohydrolase FolE2 (266 aa).

This sequence belongs to the GTP cyclohydrolase IV family.

The catalysed reaction is GTP + H2O = 7,8-dihydroneopterin 3'-triphosphate + formate + H(+). It participates in cofactor biosynthesis; 7,8-dihydroneopterin triphosphate biosynthesis; 7,8-dihydroneopterin triphosphate from GTP: step 1/1. Functionally, converts GTP to 7,8-dihydroneopterin triphosphate. The chain is GTP cyclohydrolase FolE2 from Methylobacillus flagellatus (strain ATCC 51484 / DSM 6875 / VKM B-1610 / KT).